The sequence spans 537 residues: Chaperonin GroEL 2 (537 aa).

ATP contacts are provided by residues 29 to 32, 86 to 90, G412, and D495; these read TLGP and DGTTT.

Belongs to the chaperonin (HSP60) family. Forms a cylinder of 14 subunits composed of two heptameric rings stacked back-to-back. Interacts with the co-chaperonin GroES.

Its subcellular location is the cytoplasm. It catalyses the reaction ATP + H2O + a folded polypeptide = ADP + phosphate + an unfolded polypeptide.. Its function is as follows. Together with its co-chaperonin GroES, plays an essential role in assisting protein folding. The GroEL-GroES system forms a nano-cage that allows encapsulation of the non-native substrate proteins and provides a physical environment optimized to promote and accelerate protein folding. In Paenarthrobacter aurescens (strain TC1), this protein is Chaperonin GroEL 2.